The following is a 40-amino-acid chain: Photosystem II reaction center protein J (40 aa).

A helical membrane pass occupies residues 8-28; the sequence is IPLWVIGTVAGILVIGIIGIF.

Belongs to the PsbJ family. PSII is composed of 1 copy each of membrane proteins PsbA, PsbB, PsbC, PsbD, PsbE, PsbF, PsbH, PsbI, PsbJ, PsbK, PsbL, PsbM, PsbT, PsbX, PsbY, PsbZ, Psb30/Ycf12, at least 3 peripheral proteins of the oxygen-evolving complex and a large number of cofactors. It forms dimeric complexes.

Its subcellular location is the plastid. It localises to the chloroplast thylakoid membrane. Functionally, one of the components of the core complex of photosystem II (PSII). PSII is a light-driven water:plastoquinone oxidoreductase that uses light energy to abstract electrons from H(2)O, generating O(2) and a proton gradient subsequently used for ATP formation. It consists of a core antenna complex that captures photons, and an electron transfer chain that converts photonic excitation into a charge separation. The chain is Photosystem II reaction center protein J from Lobularia maritima (Sweet alyssum).